A 489-amino-acid polypeptide reads, in one-letter code: Serotonin-gated chloride channel mod-1 (489 aa).

The first 20 residues, 1–20 (MKFIPEITLLLLLFVHSTQA), serve as a signal peptide directing secretion. Residues 21–240 (KGKRRKCPEG…VTFTFKRRYG (220 aa)) are Extracellular-facing. Asn44, Asn103, and Asn144 each carry an N-linked (GlcNAc...) asparagine glycan. Serotonin contacts are provided by Tyr180 and Trp226. Transmembrane regions (helical) follow at residues 241-261 (FYII…WVSF), 274-294 (VGIS…KNLP), and 304-324 (VWML…AFVC). The Cytoplasmic portion of the chain corresponds to 325-458 (YISRCQNSVR…ARFHPEAVDK (134 aa)). The interval 365–398 (GSVISHYHPTSNGNGNNNRHDTPQVTGRGSLHRN) is disordered. Over residues 372 to 391 (HPTSNGNGNNNRHDTPQVTG) the composition is skewed to polar residues. The chain crosses the membrane as a helical span at residues 459-479 (FSIVAFPLAFTMFNLVYWWHY).

The protein belongs to the ligand-gated ion channel (TC 1.A.9) family. As to expression, expressed in a subset of muscles, and head and tail neurons, including RME and GABAergic ventral nerve cord neurons. Expressed in AIY, RME, RID, RIF, ASI, DD1-6, and PVN neurons.

It is found in the membrane. It localises to the cell membrane. Its function is as follows. Functions as a 5-hydroxytryptamine (serotonin) receptor. This receptor is a ligand-gated anion-specific ion channel, selective for chloride ions. Relays a long-range endocrine signal from the body cavity neurons to modulate distal adipose triglyceride lipase atgl-1 function, via the nuclear receptor nhr-76. Together with the G-protein coupled serotonin receptor ser-1 involved in male mating behavior. May mediate an inhibitory effect of serotonin on egg laying. Involved in regulating locomotory behavior, perhaps by modulating interneuronal signaling, acting in concert with G-protein coupled serotonin receptor ser-4. In the presence of food, plays a role in initiating and extending dwelling behavior, perhaps acting in AIY, RIF and ASI neurons, in opposition to neuropeptide PDF-mediated signaling. Plays a role in aversive learning upon exposure to pathogens such as Gram-negative bacterium P.aeruginosa strain PA14; perhaps acting in interneurons in response to serotonin released by the serotonergic ADF neurons. This chain is Serotonin-gated chloride channel mod-1, found in Caenorhabditis elegans.